The following is a 131-amino-acid chain: Large ribosomal subunit protein bL17 (131 aa).

Belongs to the bacterial ribosomal protein bL17 family. Part of the 50S ribosomal subunit. Contacts protein L32.

This is Large ribosomal subunit protein bL17 from Cupriavidus pinatubonensis (strain JMP 134 / LMG 1197) (Cupriavidus necator (strain JMP 134)).